The following is a 314-amino-acid chain: Chlorinase cctP2 (314 aa).

Residues 1–14 (MEGKTSRYQDEAHD) show a composition bias toward basic and acidic residues. The tract at residues 1–24 (MEGKTSRYQDEAHDSAGSFNEETE) is disordered. Short sequence motifs (HXXHC) lie at residues 150 to 154 (HALHC) and 177 to 181 (HIEHC).

Belongs to the ustYa family.

Its pathway is mycotoxin biosynthesis. In terms of biological role, chlorinase; part of the gene cluster that mediates the biosynthesis of the mycotoxin cyclochlorotine, a hepatotoxic and carcinogenic cyclic chlorinated pentapeptide. Within the pathway, cctP2 catalyzes the formation of isocyclochlorotine via dichlorination of the Pro from the isocyclotine skeleton. The NRPS cctN initially catalyzes the condensation of L-serine (Ser), Pro, L-2-aminobutyrate (2Abu), Ser, and beta-Phe in this order to produce isocyclotine. After the dichlorination of Pro2 catalyzed by cctP2 to produce isocyclochlorotine, the cctO-mediated transacylation of isocyclochlorotine can furnish cyclochlorotine. The subsequent hydroxylation of cyclochlorotine by cctR yields hydroxycyclochlorotine as the final product. CctP1 probably acts as a phenylalanine aminomutase and provides the uncommon building block beta-Phe. Furthermore, 2Abu can be synthesized from threonine by one of the threonine dehydratases and transaminases localized outside of the cluster. The functions of the remaining proteins encoded by the cluster, cctM and cctT, have not been identified yet. In Talaromyces islandicus (Penicillium islandicum), this protein is Chlorinase cctP2.